The following is a 200-amino-acid chain: WUSCHEL-related homeobox 9 (200 aa).

Residues 10–74 (VKCGRWNPTA…NHKARERHHH (65 aa)) constitute a DNA-binding region (homeobox; WUS-type). Positions 70–80 (ERHHHKKRRRG) are enriched in basic residues. Positions 70 to 118 (ERHHHKKRRRGASSPDSGSNDDDGRAAAHEGDADLVLQPPESKREARSY) are disordered. Residues 91–101 (DDGRAAAHEGD) are compositionally biased toward basic and acidic residues.

It belongs to the WUS homeobox family. In terms of tissue distribution, specifically expressed in the central cells of the quiescent center (QC) of the root.

It is found in the nucleus. Its function is as follows. Transcription factor which may be involved in the specification and maintenance of the stem cells (QC cells) in the root apical meristem (RAM). The chain is WUSCHEL-related homeobox 9 (WOX9) from Oryza sativa subsp. japonica (Rice).